Here is a 232-residue protein sequence, read N- to C-terminus: Large ribosomal subunit protein uL1 (232 aa).

The protein belongs to the universal ribosomal protein uL1 family. Part of the 50S ribosomal subunit.

Functionally, binds directly to 23S rRNA. The L1 stalk is quite mobile in the ribosome, and is involved in E site tRNA release. In terms of biological role, protein L1 is also a translational repressor protein, it controls the translation of the L11 operon by binding to its mRNA. The protein is Large ribosomal subunit protein uL1 of Coxiella burnetii (strain RSA 331 / Henzerling II).